The primary structure comprises 78 residues: Large ribosomal subunit protein bL28 (78 aa).

The disordered stretch occupies residues 1-30; the sequence is MAAHCQVTGAQPGFGHSISHSHRRTKRRWN. The span at 19–30 shows a compositional bias: basic residues; it reads SHSHRRTKRRWN.

Belongs to the bacterial ribosomal protein bL28 family.

In Kocuria rhizophila (strain ATCC 9341 / DSM 348 / NBRC 103217 / DC2201), this protein is Large ribosomal subunit protein bL28.